The chain runs to 131 residues: C-C motif chemokine 21 (131 aa).

The first 23 residues, 1-23, serve as a signal peptide directing secretion; that stretch reads MAQSLALSLLILVLAFGIPGTQG. 3 disulfide bridges follow: C31–C57, C32–C75, and C103–C119. A disordered region spans residues 89–131; it reads HLDKTPTPRKPVQGCRKDRGVPKNGKKGKGCKRTEQSQTPKGP.

Belongs to the intercrine beta (chemokine CC) family. In terms of assembly, monomer. Binds to CCR7. Interacts with PDPN; relocalizes PDPN to the basolateral membrane. Interacts with TNFAIP6 (via Link domain). Interacts with GPR174.

It localises to the secreted. Its function is as follows. Inhibits hemopoiesis and stimulates chemotaxis. Chemotactic in vitro for thymocytes and activated T-cells, but not for B-cells, macrophages, or neutrophils. Shows preferential activity towards naive T-cells. May play a role in mediating homing of lymphocytes to secondary lymphoid organs. Binds to atypical chemokine receptor ACKR4 and mediates the recruitment of beta-arrestin (ARRB1/2) to ACKR4. This is C-C motif chemokine 21 (CCL21) from Macaca mulatta (Rhesus macaque).